We begin with the raw amino-acid sequence, 124 residues long: Small ribosomal subunit protein uS12 (124 aa).

A disordered region spans residues 1–30; that stretch reads MPTIQQLVRKGRTPKVTKTKAPALKANPQQ. Positions 9-18 are enriched in basic residues; that stretch reads RKGRTPKVTK.

It belongs to the universal ribosomal protein uS12 family. Part of the 30S ribosomal subunit. Contacts proteins S8 and S17. May interact with IF1 in the 30S initiation complex.

In terms of biological role, with S4 and S5 plays an important role in translational accuracy. Interacts with and stabilizes bases of the 16S rRNA that are involved in tRNA selection in the A site and with the mRNA backbone. Located at the interface of the 30S and 50S subunits, it traverses the body of the 30S subunit contacting proteins on the other side and probably holding the rRNA structure together. The combined cluster of proteins S8, S12 and S17 appears to hold together the shoulder and platform of the 30S subunit. The protein is Small ribosomal subunit protein uS12 of Leifsonia xyli subsp. xyli (strain CTCB07).